The chain runs to 659 residues: Putative RING finger protein R311 (659 aa).

Residues Cys-502–Met-540 form an RING-type zinc finger.

The protein is Putative RING finger protein R311 of Acanthamoeba polyphaga (Amoeba).